Consider the following 157-residue polypeptide: D-aminoacyl-tRNA deacylase (157 aa).

The Gly-cisPro motif, important for rejection of L-amino acids motif lies at 137-138; that stretch reads GP.

This sequence belongs to the DTD family. Homodimer.

Its subcellular location is the cytoplasm. It carries out the reaction glycyl-tRNA(Ala) + H2O = tRNA(Ala) + glycine + H(+). The catalysed reaction is a D-aminoacyl-tRNA + H2O = a tRNA + a D-alpha-amino acid + H(+). Functionally, an aminoacyl-tRNA editing enzyme that deacylates mischarged D-aminoacyl-tRNAs. Also deacylates mischarged glycyl-tRNA(Ala), protecting cells against glycine mischarging by AlaRS. Acts via tRNA-based rather than protein-based catalysis; rejects L-amino acids rather than detecting D-amino acids in the active site. By recycling D-aminoacyl-tRNA to D-amino acids and free tRNA molecules, this enzyme counteracts the toxicity associated with the formation of D-aminoacyl-tRNA entities in vivo and helps enforce protein L-homochirality. The sequence is that of D-aminoacyl-tRNA deacylase from Roseiflexus castenholzii (strain DSM 13941 / HLO8).